Consider the following 333-residue polypeptide: Anthranilate phosphoribosyltransferase (333 aa).

Residues Gly-80, 83 to 84 (GD), Thr-88, 90 to 93 (NLST), 108 to 116 (KHGNRSASG), and Ser-120 each bind 5-phospho-alpha-D-ribose 1-diphosphate. Gly-80 provides a ligand contact to anthranilate. Ser-92 lines the Mg(2+) pocket. Asn-111 serves as a coordination point for anthranilate. Arg-166 is an anthranilate binding site. Residues Asp-224 and Glu-225 each contribute to the Mg(2+) site.

This sequence belongs to the anthranilate phosphoribosyltransferase family. In terms of assembly, homodimer. The cofactor is Mg(2+).

The enzyme catalyses N-(5-phospho-beta-D-ribosyl)anthranilate + diphosphate = 5-phospho-alpha-D-ribose 1-diphosphate + anthranilate. The protein operates within amino-acid biosynthesis; L-tryptophan biosynthesis; L-tryptophan from chorismate: step 2/5. Its function is as follows. Catalyzes the transfer of the phosphoribosyl group of 5-phosphorylribose-1-pyrophosphate (PRPP) to anthranilate to yield N-(5'-phosphoribosyl)-anthranilate (PRA). This chain is Anthranilate phosphoribosyltransferase, found in Pyrobaculum aerophilum (strain ATCC 51768 / DSM 7523 / JCM 9630 / CIP 104966 / NBRC 100827 / IM2).